Here is a 78-residue protein sequence, read N- to C-terminus: Translation initiation factor IF-1, chloroplastic (78 aa).

Residues 1-72 (MEKQNLIDME…TKGRITYRLR (72 aa)) form the S1-like domain.

It belongs to the IF-1 family. As to quaternary structure, component of the 30S ribosomal translation pre-initiation complex which assembles on the 30S ribosome in the order IF-2 and IF-3, IF-1 and N-formylmethionyl-tRNA(fMet); mRNA recruitment can occur at any time during PIC assembly.

The protein resides in the plastid. It localises to the chloroplast. In terms of biological role, one of the essential components for the initiation of protein synthesis. Stabilizes the binding of IF-2 and IF-3 on the 30S subunit to which N-formylmethionyl-tRNA(fMet) subsequently binds. Helps modulate mRNA selection, yielding the 30S pre-initiation complex (PIC). Upon addition of the 50S ribosomal subunit IF-1, IF-2 and IF-3 are released leaving the mature 70S translation initiation complex. In Anthoceros angustus (Hornwort), this protein is Translation initiation factor IF-1, chloroplastic.